The sequence spans 1040 residues: DIS3-like exonuclease 1 (1040 aa).

The 79-residue stretch at 232–310 (AGIKSGRYKQ…KGRTGALCEN (79 aa)) folds into the CSD1 domain. In terms of domain architecture, CSD2 spans 360–426 (VLVMPWDYRI…AEIATILVEN (67 aa)). The RNB domain occupies 459–808 (RLDLRETHLV…VHRLLLAAVN (350 aa)).

Belongs to the RNR ribonuclease family. In terms of assembly, component of the RNA exosome complex. The cofactor is Mg(2+).

The protein localises to the cytoplasm. The enzyme catalyses Exonucleolytic cleavage in the 3'- to 5'-direction to yield nucleoside 5'-phosphates.. Functionally, catalytic component of the RNA exosome complex which has 3'-&gt;5' exoribonuclease activity and participates in a multitude of cellular RNA processing and degradation events. The sequence is that of DIS3-like exonuclease 1 (dis3l) from Xenopus laevis (African clawed frog).